The primary structure comprises 348 residues: Protein RecA (348 aa).

Residue Gly65–Thr72 coordinates ATP.

The protein belongs to the RecA family.

The protein resides in the cytoplasm. In terms of biological role, can catalyze the hydrolysis of ATP in the presence of single-stranded DNA, the ATP-dependent uptake of single-stranded DNA by duplex DNA, and the ATP-dependent hybridization of homologous single-stranded DNAs. It interacts with LexA causing its activation and leading to its autocatalytic cleavage. This Alteromonas mediterranea (strain DSM 17117 / CIP 110805 / LMG 28347 / Deep ecotype) protein is Protein RecA.